The primary structure comprises 271 residues: Interleukin-1 alpha (271 aa).

A propeptide spanning residues 1–112 (MAKVPDMFED…DSEEEIIKPR (112 aa)) is cleaved from the precursor. N6-acetyllysine is present on Lys82. The interval 82–86 (KKRRL) is nuclear localization signal (NLS). Ser87 is subject to Phosphoserine. N-linked (GlcNAc...) asparagine glycans are attached at residues Asn102, Asn121, Asn137, and Asn141.

This sequence belongs to the IL-1 family. As to quaternary structure, monomer. Interacts with TMED10; the interaction mediates the translocation from the cytoplasm into the ERGIC (endoplasmic reticulum-Golgi intermediate compartment) and thereby secretion. Interacts with IL1R1. Interacts with S100A13; this interaction is the first step in the export of IL1A, followed by direct translocation of this complex across the plasma membrane. Acetylated within its nuclear localization sequence, which impacts subcellular localization. Post-translationally, proteolytic processed by CAPN1 in a calcium-dependent manner. Cleavage from 31 kDa precursor to 18 kDa biologically active molecules. In terms of processing, phosphorylated. Phosphorylation greatly enhances susceptibility to digestion and promotes the conversion of pre-IL1A alpha to the biologically active IL1A.

It is found in the nucleus. Its subcellular location is the cytoplasm. The protein localises to the secreted. Its function is as follows. Cytokine constitutively present intracellularly in nearly all resting non-hematopoietic cells that plays an important role in inflammation and bridges the innate and adaptive immune systems. After binding to its receptor IL1R1 together with its accessory protein IL1RAP, forms the high affinity interleukin-1 receptor complex. Signaling involves the recruitment of adapter molecules such as MYD88, IRAK1 or IRAK4. In turn, mediates the activation of NF-kappa-B and the three MAPK pathways p38, p42/p44 and JNK pathways. Within the cell, acts as an alarmin and cell death results in its liberation in the extracellular space after disruption of the cell membrane to induce inflammation and alert the host to injury or damage. In addition to its role as a danger signal, which occurs when the cytokine is passively released by cell necrosis, directly senses DNA damage and acts as signal for genotoxic stress without loss of cell integrity. The sequence is that of Interleukin-1 alpha (IL1A) from Macaca fascicularis (Crab-eating macaque).